We begin with the raw amino-acid sequence, 246 residues long: Proteasome subunit alpha type-6 (246 aa).

The protein belongs to the peptidase T1A family. The 26S proteasome consists of a 20S proteasome core and two 19S regulatory subunits. The 20S proteasome core is composed of 28 subunits that are arranged in four stacked rings, resulting in a barrel-shaped structure. The two end rings are each formed by seven alpha subunits, and the two central rings are each formed by seven beta subunits. The catalytic chamber with the active sites is on the inside of the barrel.

The protein resides in the cytoplasm. It is found in the nucleus. In terms of biological role, the proteasome is a multicatalytic proteinase complex which is characterized by its ability to cleave peptides with Arg, Phe, Tyr, Leu, and Glu adjacent to the leaving group at neutral or slightly basic pH. The proteasome has an ATP-dependent proteolytic activity. This is Proteasome subunit alpha type-6 (PAA1) from Nicotiana tabacum (Common tobacco).